A 466-amino-acid chain; its full sequence is Probable Xaa-Pro aminopeptidase pepP (466 aa).

Positions 264, 275, 398, and 438 each coordinate Mn(2+).

Belongs to the peptidase M24B family. Requires Mn(2+) as cofactor.

It catalyses the reaction Release of any N-terminal amino acid, including proline, that is linked to proline, even from a dipeptide or tripeptide.. Functionally, catalyzes the removal of a penultimate prolyl residue from the N-termini of peptides. The protein is Probable Xaa-Pro aminopeptidase pepP (pepP) of Aspergillus terreus (strain NIH 2624 / FGSC A1156).